Reading from the N-terminus, the 366-residue chain is 3-dehydroquinate synthase (366 aa).

Residues 107 to 111, 131 to 132, lysine 144, and lysine 153 each bind NAD(+); these read GVIGD and TS. Positions 186, 251, and 268 each coordinate Zn(2+).

It belongs to the sugar phosphate cyclases superfamily. Dehydroquinate synthase family. Co(2+) is required as a cofactor. The cofactor is Zn(2+). NAD(+) serves as cofactor.

It is found in the cytoplasm. It carries out the reaction 7-phospho-2-dehydro-3-deoxy-D-arabino-heptonate = 3-dehydroquinate + phosphate. It functions in the pathway metabolic intermediate biosynthesis; chorismate biosynthesis; chorismate from D-erythrose 4-phosphate and phosphoenolpyruvate: step 2/7. In terms of biological role, catalyzes the conversion of 3-deoxy-D-arabino-heptulosonate 7-phosphate (DAHP) to dehydroquinate (DHQ). The protein is 3-dehydroquinate synthase of Rippkaea orientalis (strain PCC 8801 / RF-1) (Cyanothece sp. (strain PCC 8801)).